The chain runs to 822 residues: Phenylalanine--tRNA ligase beta subunit (822 aa).

A tRNA-binding domain is found at 39–150; sequence ADRLVGFRTA…ETAPIGESYA (112 aa). The 104-residue stretch at 399–502 folds into the B5 domain; that stretch reads DWKRTARLRF…RLYGLDNVPA (104 aa). Residues D486, E489, and E490 each coordinate Mg(2+). The FDX-ACB domain maps to 728-821; sequence SPLQPVRRDF…VLKATGAVLR (94 aa).

It belongs to the phenylalanyl-tRNA synthetase beta subunit family. Type 1 subfamily. Tetramer of two alpha and two beta subunits. Mg(2+) is required as a cofactor.

The protein resides in the cytoplasm. The catalysed reaction is tRNA(Phe) + L-phenylalanine + ATP = L-phenylalanyl-tRNA(Phe) + AMP + diphosphate + H(+). The sequence is that of Phenylalanine--tRNA ligase beta subunit from Gluconobacter oxydans (strain 621H) (Gluconobacter suboxydans).